Here is a 345-residue protein sequence, read N- to C-terminus: Methylthioribose-1-phosphate isomerase (345 aa).

Substrate is bound by residues 47 to 49, Arg-90, and Gln-199; that span reads RGA. Asp-240 serves as the catalytic Proton donor. 250–251 lines the substrate pocket; it reads NK.

It belongs to the eIF-2B alpha/beta/delta subunits family. MtnA subfamily.

The enzyme catalyses 5-(methylsulfanyl)-alpha-D-ribose 1-phosphate = 5-(methylsulfanyl)-D-ribulose 1-phosphate. It functions in the pathway amino-acid biosynthesis; L-methionine biosynthesis via salvage pathway; L-methionine from S-methyl-5-thio-alpha-D-ribose 1-phosphate: step 1/6. In terms of biological role, catalyzes the interconversion of methylthioribose-1-phosphate (MTR-1-P) into methylthioribulose-1-phosphate (MTRu-1-P). The chain is Methylthioribose-1-phosphate isomerase from Crocosphaera subtropica (strain ATCC 51142 / BH68) (Cyanothece sp. (strain ATCC 51142)).